A 399-amino-acid polypeptide reads, in one-letter code: P2X purinoceptor 1 (399 aa).

The Cytoplasmic portion of the chain corresponds to 1–28 (MARRLQDELSAFFFEYDTPRMVLVRNKK). Residues 29–50 (VGVIFRLIQLVVLVYVIGWVFV) form a helical membrane-spanning segment. Over 51–338 (YEKGYQTSSD…IPTMTTIGSG (288 aa)) the chain is Extracellular. CTP is bound by residues K68, K70, and K140. K70 contacts ATP. Disulfide bonds link C117–C165, C126–C149, and C132–C159. N-linked (GlcNAc...) asparagine glycosylation is found at N153 and N184. T186 contacts CTP. T186 serves as a coordination point for ATP. A glycan (N-linked (GlcNAc...) asparagine) is linked at N210. Disulfide bonds link C217-C227 and C261-C270. ATP contacts are provided by S286, N290, and R292. CTP contacts are provided by N290 and R292. N-linked (GlcNAc...) asparagine glycosylation is present at N300. K309 provides a ligand contact to CTP. An ATP-binding site is contributed by K309. The tract at residues 331–338 (TMTTIGSG) is pore-forming motif. Residues 339–358 (IGIFGVATVLCDLLLLHILP) form a helical membrane-spanning segment. Residues 359–399 (KRHYYKQKKFKYAEDMGPGEGEHDPVATSSTLGLQENMRTS) lie on the Cytoplasmic side of the membrane. Positions 374-399 (MGPGEGEHDPVATSSTLGLQENMRTS) are disordered. Residues 385–399 (ATSSTLGLQENMRTS) are compositionally biased toward polar residues. 2 positions are modified to phosphoserine: S387 and S388. The residue at position 389 (T389) is a Phosphothreonine.

This sequence belongs to the P2X receptor family. As to quaternary structure, functional P2XRs are organized as homomeric and heteromeric trimers. Homotrimer. Forms heterodimer with P2RX2. Forms heterodimer with P2RX4. Forms heterodimer with P2RX5. As to expression, high levels in vas deferens and urinary bladder. Lower extent in spinal cord, coeliac ganglion, lung and spleen (probably in the smooth muscle part of both organs).

The protein resides in the cell membrane. It catalyses the reaction Ca(2+)(in) = Ca(2+)(out). It carries out the reaction K(+)(in) = K(+)(out). The catalysed reaction is Na(+)(in) = Na(+)(out). Activated by low concentrations of ATP (&lt;1 uM). Undergoes rapid desensitisation. Sensitives to the ATP agonist:alpha/beta-methylene-ATP. Modulated by cholesterol. ATP-gated nonselective transmembrane cation channel permeable to potassium, sodium and with relatively high calcium permeability. Furthermore, CTP functions as a weak affinity agonist for P2RX1. Plays a role a role in urogenital, immune and cardiovascular function. Specifically, plays an important role in neurogenic contraction of smooth muscle of the vas deferens, and therefore is essential for normal male reproductive function. In addition, contributes to smooth muscle contractions of the urinary bladder. On platelets, contributes to platelet activation and aggregation and thereby, also to thrombosis. On neutrophils, it is involved in chemotaxis and in mitigating the activation of circulating cells. The chain is P2X purinoceptor 1 (P2rx1) from Rattus norvegicus (Rat).